We begin with the raw amino-acid sequence, 94 residues long: Aspartyl/glutamyl-tRNA(Asn/Gln) amidotransferase subunit C (94 aa).

This sequence belongs to the GatC family. As to quaternary structure, heterotrimer of A, B and C subunits.

The catalysed reaction is L-glutamyl-tRNA(Gln) + L-glutamine + ATP + H2O = L-glutaminyl-tRNA(Gln) + L-glutamate + ADP + phosphate + H(+). It carries out the reaction L-aspartyl-tRNA(Asn) + L-glutamine + ATP + H2O = L-asparaginyl-tRNA(Asn) + L-glutamate + ADP + phosphate + 2 H(+). Its function is as follows. Allows the formation of correctly charged Asn-tRNA(Asn) or Gln-tRNA(Gln) through the transamidation of misacylated Asp-tRNA(Asn) or Glu-tRNA(Gln) in organisms which lack either or both of asparaginyl-tRNA or glutaminyl-tRNA synthetases. The reaction takes place in the presence of glutamine and ATP through an activated phospho-Asp-tRNA(Asn) or phospho-Glu-tRNA(Gln). In Desulfatibacillum aliphaticivorans, this protein is Aspartyl/glutamyl-tRNA(Asn/Gln) amidotransferase subunit C.